Here is a 414-residue protein sequence, read N- to C-terminus: Cytochrome c-554 (414 aa).

The N-terminal stretch at Met1–Ala24 is a signal peptide. 15 residues coordinate heme: Met110, Cys131, Cys134, His135, Met154, Cys179, Cys182, His183, Met283, Cys294, Cys297, His298, Cys378, Cys381, and His382.

Post-translationally, binds 4 heme groups per subunit. In terms of processing, the N-terminus is blocked.

Its subcellular location is the periplasm. Serves as the immediate electron donor to the oxidized BChl2 (bacteriochlorophyll dimer) that is oxidized in the first step of light-induced charge separation. Can also oxidize low-potential substrates. The sequence is that of Cytochrome c-554 (puf2C) from Chloroflexus aurantiacus (strain ATCC 29366 / DSM 635 / J-10-fl).